The chain runs to 115 residues: Ribonuclease P protein component (115 aa).

The protein belongs to the RnpA family. In terms of assembly, consists of a catalytic RNA component (M1 or rnpB) and a protein subunit.

It carries out the reaction Endonucleolytic cleavage of RNA, removing 5'-extranucleotides from tRNA precursor.. In terms of biological role, RNaseP catalyzes the removal of the 5'-leader sequence from pre-tRNA to produce the mature 5'-terminus. It can also cleave other RNA substrates such as 4.5S RNA. The protein component plays an auxiliary but essential role in vivo by binding to the 5'-leader sequence and broadening the substrate specificity of the ribozyme. The protein is Ribonuclease P protein component of Bacillus cereus (strain G9842).